The sequence spans 469 residues: Dihydrolipoyl dehydrogenase (469 aa).

Residues 34–42, lysine 51, and glycine 114 contribute to the FAD site; that span reads EKQYWGGVC. Cysteine 42 and cysteine 47 are oxidised to a cystine. NAD(+) is bound by residues 179-183, glutamate 202, and 269-272; these read GAGAI and SVGF. Positions 312 and 320 each coordinate FAD. Catalysis depends on histidine 448, which acts as the Proton acceptor.

The protein belongs to the class-I pyridine nucleotide-disulfide oxidoreductase family. Homodimer. Part of an unusual ODH/PDH supercomplex, consisting of AceE (E1), AceF (E2), and Lpd (E3) together with OdhA (E1+E2). Requires FAD as cofactor.

The protein localises to the cytoplasm. The enzyme catalyses N(6)-[(R)-dihydrolipoyl]-L-lysyl-[protein] + NAD(+) = N(6)-[(R)-lipoyl]-L-lysyl-[protein] + NADH + H(+). It functions in the pathway carbohydrate metabolism; tricarboxylic acid cycle; succinyl-CoA from 2-oxoglutarate (dehydrogenase route): step 1/1. Its function is as follows. Lipoamide dehydrogenase is an essential component of the pyruvate dehydrogenase (PDH) and 2-oxoglutarate dehydrogenase (ODH) complexes. Catalyzes the reoxidation of dihydrolipoyl groups which are covalently attached to the lipoate acyltransferase components (E2) of the complexes. Also catalyzes a reversible NADH:NAD(+) transhydrogenation, and is able to transfer electrons from NADH to various redox-active compounds and quinones. May be involved in quinone redox cycling in C.glutamicum. In Corynebacterium glutamicum (strain ATCC 13032 / DSM 20300 / JCM 1318 / BCRC 11384 / CCUG 27702 / LMG 3730 / NBRC 12168 / NCIMB 10025 / NRRL B-2784 / 534), this protein is Dihydrolipoyl dehydrogenase (lpd).